Here is an 88-residue protein sequence, read N- to C-terminus: Phosphocarrier protein HPr (88 aa).

The HPr domain maps to 1–88; sequence MAEKTFKVVS…DTLAKEGLAE (88 aa). Phosphoserine is present on serine 12. Histidine 15 functions as the Pros-phosphohistidine intermediate in the catalytic mechanism. Serine 46 carries the post-translational modification Phosphoserine; by HPrK/P.

This sequence belongs to the HPr family.

Its subcellular location is the cytoplasm. With respect to regulation, phosphorylation on Ser-46 inhibits the phosphoryl transfer from enzyme I to HPr. General (non sugar-specific) component of the phosphoenolpyruvate-dependent sugar phosphotransferase system (sugar PTS). This major carbohydrate active-transport system catalyzes the phosphorylation of incoming sugar substrates concomitantly with their translocation across the cell membrane. The phosphoryl group from phosphoenolpyruvate (PEP) is transferred to the phosphoryl carrier protein HPr by enzyme I. Phospho-HPr then transfers it to the PTS EIIA domain. Its function is as follows. P-Ser-HPr interacts with the catabolite control protein A (CcpA), forming a complex that binds to DNA at the catabolite response elements cre, operator sites preceding a large number of catabolite-regulated genes. Thus, P-Ser-HPr is a corepressor in carbon catabolite repression (CCR), a mechanism that allows bacteria to coordinate and optimize the utilization of available carbon sources. P-Ser-HPr also plays a role in inducer exclusion, in which it probably interacts with several non-PTS permeases and inhibits their transport activity. In Geobacillus stearothermophilus (Bacillus stearothermophilus), this protein is Phosphocarrier protein HPr (ptsH).